The primary structure comprises 245 residues: PF03932 family protein CutC (245 aa).

The protein belongs to the CutC family.

It localises to the cytoplasm. This Sinorhizobium medicae (strain WSM419) (Ensifer medicae) protein is PF03932 family protein CutC.